The chain runs to 281 residues: Eukaryotic translation initiation factor 3 subunit G (281 aa).

The segment at 1–32 is disordered; it reads MSRPAGRTDWAEEDDETELALPSQTVVKNKDG. An RRM domain is found at 202 to 280; the sequence is ATLRVTNVSE…LILRVEFAKK (79 aa).

The protein belongs to the eIF-3 subunit G family. Component of the eukaryotic translation initiation factor 3 (eIF-3) complex.

The protein resides in the cytoplasm. Its function is as follows. RNA-binding component of the eukaryotic translation initiation factor 3 (eIF-3) complex, which is involved in protein synthesis of a specialized repertoire of mRNAs and, together with other initiation factors, stimulates binding of mRNA and methionyl-tRNAi to the 40S ribosome. The eIF-3 complex specifically targets and initiates translation of a subset of mRNAs involved in cell proliferation. This subunit can bind 18S rRNA. This Phaeosphaeria nodorum (strain SN15 / ATCC MYA-4574 / FGSC 10173) (Glume blotch fungus) protein is Eukaryotic translation initiation factor 3 subunit G.